Here is a 119-residue protein sequence, read N- to C-terminus: Chorion class B protein M2807 (119 aa).

Residues 1-11 (GGLGGGCGRGF) form a left arm region. The central domain stretch occupies residues 12-80 (SGGGLPVATA…GNGAVGITRE (69 aa)). The right arm (Gly-rich tandem repeats) stretch occupies residues 81–119 (GGLGYGAGYGDGYGLGYGGYGGGYGLGYGGYGGCGCGCG).

This sequence belongs to the chorion protein family.

This protein is one of many from the eggshell of the silk moth. In Bombyx mori (Silk moth), this protein is Chorion class B protein M2807.